We begin with the raw amino-acid sequence, 114 residues long: Large ribosomal subunit protein uL18 (114 aa).

Belongs to the universal ribosomal protein uL18 family. As to quaternary structure, part of the 50S ribosomal subunit; part of the 5S rRNA/L5/L18/L25 subcomplex. Contacts the 5S and 23S rRNAs.

Functionally, this is one of the proteins that bind and probably mediate the attachment of the 5S RNA into the large ribosomal subunit, where it forms part of the central protuberance. This is Large ribosomal subunit protein uL18 from Parabacteroides distasonis (strain ATCC 8503 / DSM 20701 / CIP 104284 / JCM 5825 / NCTC 11152).